The following is a 2241-amino-acid chain: Little elongation complex subunit 1 (2241 aa).

A coiled-coil region spans residues 22–185 (CASLQQNLNE…KQKNEKELRH (164 aa)). 2 stretches are compositionally biased toward basic and acidic residues: residues 222–233 (GEGGRRIPEKPA) and 296–315 (AFCE…DGNR). 3 disordered regions span residues 222-255 (GEGG…GGPA), 273-315 (GDFS…DGNR), and 368-387 (GEFT…SMES). Phosphoserine is present on Ser523. The interval 552–590 (EFSKRTLTDGSASKSPCVTGSGRFQRRERDVRESTPQSG) is disordered. Over residues 559-569 (TDGSASKSPCV) the composition is skewed to polar residues. Residue Ser676 is modified to Phosphoserine. The interval 703 to 817 (TAKGHSLPQS…PSGESTIPPE (115 aa)) is disordered. Over residues 718–728 (TGGGQCKGRGP) the composition is skewed to gly residues. The span at 738–760 (DWTSLARSQAGFTRRSSGSADST) shows a compositional bias: polar residues. Thr803 carries the post-translational modification Phosphothreonine. Position 896 is a phosphoserine (Ser896). The segment at 971–1119 (SGVTSGVFPA…VGEAGHPSDV (149 aa)) is disordered. Acidic residues predominate over residues 1065–1074 (EEDTEVEDEA). Residues 1091 to 1104 (RQQEQAEDSHRPLG) are compositionally biased toward basic and acidic residues. Lys1189 is subject to N6-acetyllysine. 3 disordered regions span residues 1231-1328 (SDVL…CLSI), 1419-1475 (ASSQ…KSRL), and 1543-1671 (VHLN…AAAS). The segment covering 1252–1266 (DTEHALLESTHHSQA) has biased composition (basic and acidic residues). A compositionally biased stretch (polar residues) spans 1460–1470 (DISSNGQSANF). A phosphoserine mark is found at Ser1553 and Ser1582. Residues 1574-1585 (DRSTPTNCSPDT) are compositionally biased toward polar residues. Residues 1595–1606 (PPLPPLLPPLIA) show a composition bias toward pro residues. Thr1607 carries the phosphothreonine modification. Residues Ser1657, Ser1662, Ser1664, Ser1666, and Ser1677 each carry the phosphoserine modification. Disordered stretches follow at residues 1777–1800 (GSSG…AGGK) and 1812–1843 (KRLR…GSPL). Positions 1781 to 1794 (ADGSQGKSQDSGVQ) are enriched in polar residues. Basic and acidic residues predominate over residues 1814 to 1829 (LRLDNKSPEPDTREVT). The residue at position 1820 (Ser1820) is a Phosphoserine.

It belongs to the ICE1 family. Component of the little elongation complex (LEC), at least composed of ELL (ELL, ELL2 or ELL3), ZC3H8, ICE1 and ICE2. Interacts (via N-terminus domain) with ELL. Interacts (via C-terminus domain) with ICE2 and ZC3H8.

Its subcellular location is the nucleus. It is found in the cajal body. Component of the little elongation complex (LEC), a complex required to regulate small nuclear RNA (snRNA) gene transcription by RNA polymerase II and III. Specifically acts as a scaffold protein that promotes the LEC complex formation and recruitment and RNA polymerase II occupancy at snRNA genes in subnuclear bodies. This chain is Little elongation complex subunit 1 (Ice1), found in Mus musculus (Mouse).